The following is a 478-amino-acid chain: MSGNAESTAYRSALEVIGAVEPRVANAIRAELTDQRESLKLIASENYASPATLLAMGNWFSDKYAEGTVGRRFYAGCQNVDTVEALAAEHARELFGAPYAYVQPHSGIDANLVAFWAVLADRIESPALRRAQARHVNDLTEADWFALRRELGNQRMLGMSLDAGGHLTHGFRPNISGKMFDQRSYGTDPETGLIDYDGVAEAAREFKPLILLGGYSAYPRKVNFRILREIADSVGATFMVDMAHFAGLVAGKAFTGDFDPVPHAHIVTSTTHKSLRGPRGGLVLCGPELAEQVDRGCPMVLGGPLPQVMAAKAVALAEARRPDFVDYAGRIVANAQALADGLQRRGAQLVTGGTDNHLALIDVTGYGLTGRQAEHALLDSGIVTNRNAIPQDPNGAWYTSGIRVGTPALTTRGLGTAELDATAELIHTVLSHTAPGTNADGTSSKAKYVLDPAVADRVGKQASDLLTGFPLYPAIDLG.

(6S)-5,6,7,8-tetrahydrofolate contacts are provided by residues Leu161 and 165–167; that span reads GHL. Lys273 carries the post-translational modification N6-(pyridoxal phosphate)lysine. Glu291 is a (6S)-5,6,7,8-tetrahydrofolate binding site.

It belongs to the SHMT family. In terms of assembly, homodimer. Requires pyridoxal 5'-phosphate as cofactor.

It is found in the cytoplasm. It catalyses the reaction (6R)-5,10-methylene-5,6,7,8-tetrahydrofolate + glycine + H2O = (6S)-5,6,7,8-tetrahydrofolate + L-serine. It functions in the pathway one-carbon metabolism; tetrahydrofolate interconversion. It participates in amino-acid biosynthesis; glycine biosynthesis; glycine from L-serine: step 1/1. Catalyzes the reversible interconversion of serine and glycine with tetrahydrofolate (THF) serving as the one-carbon carrier. This reaction serves as the major source of one-carbon groups required for the biosynthesis of purines, thymidylate, methionine, and other important biomolecules. Also exhibits THF-independent aldolase activity toward beta-hydroxyamino acids, producing glycine and aldehydes, via a retro-aldol mechanism. The polypeptide is Serine hydroxymethyltransferase (Salinispora tropica (strain ATCC BAA-916 / DSM 44818 / JCM 13857 / NBRC 105044 / CNB-440)).